A 296-amino-acid chain; its full sequence is MVSKRDKRISLDDAVGELRSGMTIGIGGWGSRRKPMALVRALLRSDVTDLTVVTYGGPDLGLLCSAGKVTKAYYGFVSLDSAPFYDPWFAKARTAGEIAVREMDEGMVKCGLEAAAARLPFLPIRAGLGSDVRRFWGDELRTVTSPYPDASGKSETLIAMPALNLDAALVHLNLGDKHGNAAYTGVDPYFDDLYCAAAEKRFVSVERVVETEELVKTVPLQNLILNRMMVDGVVEAPNGAHFTLAGDSYGRDEKFQRHYAESAKTPQAWQQFVATYLSGSEDDYQAAVKKFAEEQA.

It belongs to the 3-oxoacid CoA-transferase subunit A family. Heterotetramer composed of 2 IpdA subunits and 2 IpdB subunits.

The enzyme catalyses (3E)-2-(2-carboxylatoethyl)-3-methyl-6-oxocyclohex-1-ene-1-carboxyl-CoA + H2O = 6-methyl-3,7-dioxodecanedioyl-CoA. It participates in steroid metabolism; cholesterol degradation. Involved in the final steps of cholesterol and steroid degradation. Opens the last steroid ring of cholesterol by catalyzing the hydrolysis of (3E)-2-(2-carboxylatoethyl)-3-methyl-6-oxocyclohex-1-ene-1-carboxyl-CoA (COCHEA-CoA) to 6-methyl-3,7-dioxodecanedioyl-CoA (MeDODA-CoA). This chain is Cholesterol ring-cleaving hydrolase IpdA subunit, found in Rhodococcus jostii (strain RHA1).